Reading from the N-terminus, the 490-residue chain is GTPase Der (490 aa).

EngA-type G domains lie at 3–166 and 196–369; these read PVIA…PRDD and IKIA…KSAV. Residues 9–16, 56–60, and 118–121 each bind GTP; these read GRPNVGKS, DTGGI, and NKVD. Residues 162 to 189 form a disordered region; it reads FPRDDDEPAEGEEEEVVAEGEEAKRIPG. Residues 164–181 are compositionally biased toward acidic residues; that stretch reads RDDDEPAEGEEEEVVAEG. Residues 202–209, 249–253, and 314–317 each bind GTP; these read GRPNVGKS, DTAGV, and NKWD. One can recognise a KH-like domain in the interval 370–454; that stretch reads TRWPTSRLTQ…PIRIEFKGGE (85 aa). Residues 453-490 are disordered; that stretch reads GENPYEGNKNTLTDRQVNKKRRLMSHNKKASKKRRDKK. The segment covering 470–490 has biased composition (basic residues); sequence NKKRRLMSHNKKASKKRRDKK.

This sequence belongs to the TRAFAC class TrmE-Era-EngA-EngB-Septin-like GTPase superfamily. EngA (Der) GTPase family. In terms of assembly, associates with the 50S ribosomal subunit.

GTPase that plays an essential role in the late steps of ribosome biogenesis. This is GTPase Der from Pseudomonas fluorescens (strain Pf0-1).